A 165-amino-acid chain; its full sequence is PTS system glucose-specific EIIA component (165 aa).

The PTS EIIA type-1 domain maps to 33–137 (DPVFAGRMMG…STITPIVITN (105 aa)). Residues H70 and H85 each contribute to the Zn(2+) site. The active-site Tele-phosphohistidine intermediate; for EIIA activity is H85. H85 bears the Phosphohistidine; by HPr mark.

In terms of assembly, heterodimer with glycerol kinase (glpk). The cofactor is Zn(2+).

It localises to the cytoplasm. Its function is as follows. The phosphoenolpyruvate-dependent sugar phosphotransferase system (sugar PTS), a major carbohydrate active transport system, catalyzes the phosphorylation of incoming sugar substrates concomitantly with their translocation across the cell membrane. The enzyme II complex composed of PtsG and Crr is involved in glucose transport. This is PTS system glucose-specific EIIA component (crr) from Bacillus cereus (strain ATCC 14579 / DSM 31 / CCUG 7414 / JCM 2152 / NBRC 15305 / NCIMB 9373 / NCTC 2599 / NRRL B-3711).